The sequence spans 239 residues: Purine nucleoside phosphorylase DeoD-type (239 aa).

Position 5 (histidine 5) interacts with a purine D-ribonucleoside. Residues glycine 21, arginine 25, arginine 44, and 88–91 (RVGS) contribute to the phosphate site. A purine D-ribonucleoside contacts are provided by residues 180-182 (EME) and 204-205 (SD). Catalysis depends on aspartate 205, which acts as the Proton donor.

Belongs to the PNP/UDP phosphorylase family. In terms of assembly, homohexamer; trimer of homodimers.

It carries out the reaction a purine D-ribonucleoside + phosphate = a purine nucleobase + alpha-D-ribose 1-phosphate. The catalysed reaction is a purine 2'-deoxy-D-ribonucleoside + phosphate = a purine nucleobase + 2-deoxy-alpha-D-ribose 1-phosphate. Its function is as follows. Catalyzes the reversible phosphorolytic breakdown of the N-glycosidic bond in the beta-(deoxy)ribonucleoside molecules, with the formation of the corresponding free purine bases and pentose-1-phosphate. In Yersinia pseudotuberculosis serotype O:1b (strain IP 31758), this protein is Purine nucleoside phosphorylase DeoD-type.